We begin with the raw amino-acid sequence, 277 residues long: Bifunctional protein FolD (277 aa).

NADP(+) is bound by residues 164 to 166 (GRS), S189, and T230.

This sequence belongs to the tetrahydrofolate dehydrogenase/cyclohydrolase family. Homodimer.

The enzyme catalyses (6R)-5,10-methylene-5,6,7,8-tetrahydrofolate + NADP(+) = (6R)-5,10-methenyltetrahydrofolate + NADPH. It catalyses the reaction (6R)-5,10-methenyltetrahydrofolate + H2O = (6R)-10-formyltetrahydrofolate + H(+). The protein operates within one-carbon metabolism; tetrahydrofolate interconversion. Its function is as follows. Catalyzes the oxidation of 5,10-methylenetetrahydrofolate to 5,10-methenyltetrahydrofolate and then the hydrolysis of 5,10-methenyltetrahydrofolate to 10-formyltetrahydrofolate. This Clostridium perfringens (strain SM101 / Type A) protein is Bifunctional protein FolD.